We begin with the raw amino-acid sequence, 1409 residues long: Adhesion and penetration protein autotransporter (1409 aa).

Residues 1–25 (MKKTVFRLNFLTACVSLGIASQAWA) form the signal peptide. Residues 26-294 (GHTYFGIDYQ…LIREEWFYNE (269 aa)) form the Peptidase S6 domain. Serine 250 is an active-site residue. Disordered regions lie at residues 866–888 (YSAS…TPTS) and 1016–1078 (AKQV…SKRA). Residues 1057-1067 (VEQTTETQTSK) are compositionally biased toward polar residues. A compositionally biased stretch (basic residues) spans 1068–1077 (PKTKKGRSKR). The Autotransporter domain occupies 1156–1409 (VDQAQSALWT…NVGVKLGYRW (254 aa)).

It is found in the periplasm. The protein resides in the secreted. Its subcellular location is the cell surface. It localises to the cell outer membrane. Its function is as follows. Probable protease; promotes adherence and invasion by directly binding to a host cell structure. The protein is Adhesion and penetration protein autotransporter (hap) of Haemophilus influenzae (strain ATCC 51907 / DSM 11121 / KW20 / Rd).